Reading from the N-terminus, the 28-residue chain is Alpha-(1-6)-linked fucose-specific lectin (28 aa).

In terms of assembly, homohexamer. As to expression, expressed by mycelium-forming spores.

It is found in the secreted. Functionally, alpha-(1-6)-linked L-fucose specific lectin. The sequence is that of Alpha-(1-6)-linked fucose-specific lectin from Rhizopus stolonifer (Rhizopus nigricans).